A 376-amino-acid chain; its full sequence is Outer membrane porin C (376 aa).

The signal sequence occupies residues 1–21; that stretch reads MKLRVLSLMVPALLVAGTAGA.

Belongs to the Gram-negative porin family. In terms of assembly, homotrimer.

Its subcellular location is the cell outer membrane. Functionally, forms pores that allow passive diffusion of small molecules across the outer membrane. The protein is Outer membrane porin C (ompC) of Serratia marcescens.